A 240-amino-acid chain; its full sequence is Uridylate kinase (240 aa).

Position 15 to 18 (15 to 18) interacts with ATP; that stretch reads KLSG. Residues 23 to 28 are involved in allosteric activation by GTP; sequence GSEGFG. G57 is a binding site for UMP. ATP-binding residues include G58 and R62. UMP is bound by residues D77 and 138 to 145; that span reads TGNPFFTT. ATP-binding residues include T165, Y171, and D174.

The protein belongs to the UMP kinase family. Homohexamer.

The protein resides in the cytoplasm. The enzyme catalyses UMP + ATP = UDP + ADP. It functions in the pathway pyrimidine metabolism; CTP biosynthesis via de novo pathway; UDP from UMP (UMPK route): step 1/1. Allosterically activated by GTP. Inhibited by UTP. In terms of biological role, catalyzes the reversible phosphorylation of UMP to UDP. This Photobacterium profundum (strain SS9) protein is Uridylate kinase.